The following is a 505-amino-acid chain: Bile acid-sensitive ion channel (505 aa).

The binds the plasma membrane and stabilizes the channel in the closed state stretch occupies residues 1-30; that stretch reads MEQTEKSKVYAENGLLEKIKLCLSKKPLPS. Topologically, residues 1–61 are cytoplasmic; sequence MEQTEKSKVY…NIVQNRSKIR (61 aa). A helical transmembrane segment spans residues 62–82; that stretch reads RVLWLVVVLGSVSLVTWQIYI. Residues 83–459 lie on the Extracellular side of the membrane; sequence RLLNYFTWPT…GLFCGASLIT (377 aa). 6 disulfides stabilise this stretch: Cys-112/Cys-207, Cys-185/Cys-192, Cys-298/Cys-377, Cys-315/Cys-373, Cys-328/Cys-350, and Cys-330/Cys-342. N-linked (GlcNAc...) asparagine glycans are attached at residues Asn-147, Asn-163, Asn-178, and Asn-179. Asn-306 carries an N-linked (GlcNAc...) asparagine glycan. Asn-370, Asn-405, and Asn-421 each carry an N-linked (GlcNAc...) asparagine glycan. The GAS motif; ion selectivity filter signature appears at 454–456; it reads GAS. A helical membrane pass occupies residues 460 to 480; the sequence is IIEIIEYLFTNFYWICIFFLL. Over 481–505 the chain is Cytoplasmic; that stretch reads KISEMTQWTPPPQNHLGNKNRIEEC.

Belongs to the amiloride-sensitive sodium channel (TC 1.A.6) family. ASIC5 subfamily. Forms homotrimeric channels. Detected in small intestine, duodenum and jejunum. Detected at very low levels in testis and rectum.

The protein resides in the apical cell membrane. The protein localises to the cell membrane. The enzyme catalyses Na(+)(in) = Na(+)(out). It catalyses the reaction Li(+)(in) = Li(+)(out). The catalysed reaction is K(+)(in) = K(+)(out). It carries out the reaction H(+)(in) = H(+)(out). With respect to regulation, inhibited by the diuretic drug amiloride. Functionally, forms bile acid-gated sodium channels and may play a role in bile acid-dependent absorption and secretion by epithelial cells of the bile ducts. Displays high selectivity for sodium ions but can also permit the permeation of other cations. The gating could be indirect and the consequence of alterations of the membrane environment of the channel by bile acids. As a sodium channel of type II unipolar brush cells of the vestibulocerebellum, controlling the electrical activity of these cells, could play a role in motor coordination and balance. This Homo sapiens (Human) protein is Bile acid-sensitive ion channel.